Here is a 317-residue protein sequence, read N- to C-terminus: Retinol dehydrogenase 7 (317 aa).

33 to 57 (FITGCDSGFGNLLARQLDRRGMRVL) is an NADP(+) binding site. Position 164 (Ser-164) interacts with substrate. The active-site Proton acceptor is Tyr-176.

This sequence belongs to the short-chain dehydrogenases/reductases (SDR) family.

It localises to the microsome. The protein localises to the endoplasmic reticulum. The enzyme catalyses all-trans-retinol--[retinol-binding protein] + NAD(+) = all-trans-retinal--[retinol-binding protein] + NADH + H(+). It participates in cofactor metabolism; retinol metabolism. In terms of biological role, acts on retinol bound on cellular retinol-binding protein (CRBP). The chain is Retinol dehydrogenase 7 from Rattus norvegicus (Rat).